An 820-amino-acid polypeptide reads, in one-letter code: SART-1 family protein DOT2 (820 aa).

Basic and acidic residues-rich tracts occupy residues 1-156 (MEVE…DNRG), 210-219 (EEKRNAEKQR), and 426-445 (LGSR…ERIE). 8 disordered regions span residues 1–177 (MEVE…SALD), 210–248 (EEKR…EHLS), 420–445 (GLGA…ERIE), 523–544 (SSTN…ENTV), 564–617 (KPES…PDEN), 657–678 (KLVG…SKDR), 729–748 (KLKQ…RMRE), and 762–820 (GHVK…RPKP). Ser22 is subject to Phosphoserine. 3 coiled-coil regions span residues 58 to 120 (RDKE…EKEK), 171 to 235 (KEAS…NLNQ), and 433 to 510 (RRQA…KEEA). A compositionally biased stretch (low complexity) spans 525–543 (TNQTTDDNTTTGDETQENT). Residues 582-591 (VEVKEEHPDG) are compositionally biased toward basic and acidic residues. The span at 596–606 (NDTDMDAAEDS) shows a compositional bias: acidic residues. Composition is skewed to basic and acidic residues over residues 607–617 (SDTKEITPDEN) and 665–678 (DGGK…SKDR). Polar residues-rich tracts occupy residues 733 to 744 (MKNSDTPSQSVQ) and 767 to 776 (GQTSDPQSGF). The span at 792–807 (GDRKVEHFLGIKRKSE) shows a compositional bias: basic and acidic residues.

It belongs to the SNU66/SART1 family. As to expression, expressed in lateral root cap, columella, meristem and quiescent center (QC). Expressed in young leaves.

It is found in the nucleus. Functionally, plays a role in root, shoot and flower development. Probably required for normal root and shoot meristem organization and maintenance and the proper expression of PIN and PLT genes. Involved in leaf vasculature patterning. The polypeptide is SART-1 family protein DOT2 (Arabidopsis thaliana (Mouse-ear cress)).